Consider the following 463-residue polypeptide: Pentatricopeptide repeat-containing protein At2g17670 (463 aa).

A disordered region spans residues 1–63; that stretch reads MGKVPSSFRS…PSLRNPFKSP (63 aa). PPR repeat units follow at residues 121–157, 158–192, 193–223, 229–263, 264–298, 299–333, 334–368, 369–403, and 404–438; these read GRST…GLEP, DQVT…HSPP, DTYT…MRDD, DLVS…GFKP, DCFL…GVEP, DQIT…GYEP, DTAT…GCAP, NDCT…GVKL, and ESNG…KSLS.

This sequence belongs to the PPR family. P subfamily.

This chain is Pentatricopeptide repeat-containing protein At2g17670, found in Arabidopsis thaliana (Mouse-ear cress).